A 324-amino-acid chain; its full sequence is Glyoxylate/hydroxypyruvate reductase B (324 aa).

Residues Arg237 and Glu266 contribute to the active site. The active-site Proton donor is His285.

It belongs to the D-isomer specific 2-hydroxyacid dehydrogenase family. GhrB subfamily. As to quaternary structure, homodimer.

The protein resides in the cytoplasm. The catalysed reaction is glycolate + NADP(+) = glyoxylate + NADPH + H(+). It carries out the reaction (R)-glycerate + NAD(+) = 3-hydroxypyruvate + NADH + H(+). It catalyses the reaction (R)-glycerate + NADP(+) = 3-hydroxypyruvate + NADPH + H(+). In terms of biological role, catalyzes the NADPH-dependent reduction of glyoxylate and hydroxypyruvate into glycolate and glycerate, respectively. The sequence is that of Glyoxylate/hydroxypyruvate reductase B from Salmonella paratyphi A (strain ATCC 9150 / SARB42).